An 83-amino-acid chain; its full sequence is Retinal cone rhodopsin-sensitive cGMP 3',5'-cyclic phosphodiesterase subunit gamma (83 aa).

A compositionally biased stretch (polar residues) spans 1–17 (MSDNTVLAPPTSNQGPT). Residues 1–51 (MSDNTVLAPPTSNQGPTTPRKGPPKFKQRQTRQFKSKPPKKGVKGFGDDIP) are disordered. Residues 22–43 (GPPKFKQRQTRQFKSKPPKKGV) show a composition bias toward basic residues.

Belongs to the rod/cone cGMP-PDE gamma subunit family. In terms of assembly, tetramer composed of two catalytic chains (alpha and beta), and two inhibitory chains (gamma).

The enzyme catalyses 3',5'-cyclic GMP + H2O = GMP + H(+). Its function is as follows. Participates in processes of transmission and amplification of the visual signal. cGMP-PDEs are the effector molecules in G-protein-mediated phototransduction in vertebrate rods and cones. This Bos taurus (Bovine) protein is Retinal cone rhodopsin-sensitive cGMP 3',5'-cyclic phosphodiesterase subunit gamma (PDE6H).